The following is a 212-amino-acid chain: tRNA (guanine-N(7)-)-methyltransferase (212 aa).

Residues glutamate 44, aspartate 69, aspartate 96, and aspartate 118 each coordinate S-adenosyl-L-methionine. The active site involves aspartate 118. Residue lysine 122 coordinates substrate. The interval 124–129 is interaction with RNA; sequence RHEKRR. Substrate-binding positions include aspartate 154 and 191–194; that span reads TEYE.

Belongs to the class I-like SAM-binding methyltransferase superfamily. TrmB family.

The enzyme catalyses guanosine(46) in tRNA + S-adenosyl-L-methionine = N(7)-methylguanosine(46) in tRNA + S-adenosyl-L-homocysteine. The protein operates within tRNA modification; N(7)-methylguanine-tRNA biosynthesis. In terms of biological role, catalyzes the formation of N(7)-methylguanine at position 46 (m7G46) in tRNA. The chain is tRNA (guanine-N(7)-)-methyltransferase from Streptococcus suis (strain 05ZYH33).